The primary structure comprises 183 residues: MTATAQQLEYLKNSIQSIEDYPKPGILFRDVTSLLEDPKAYALSIELLTERYKDAGITKVVGTEARGFLFGAPVALALGVGFVPVRKPRKLPRETIAESYELEYGTDQLEIHVDAIKPGDKVLVVDDLLATGGTIDATVKLIRRLGGEVHDAAFIINLFDLGGEQRLEKLGIHCYSLVPFPGH.

Belongs to the purine/pyrimidine phosphoribosyltransferase family. Homodimer.

The protein localises to the cytoplasm. The enzyme catalyses AMP + diphosphate = 5-phospho-alpha-D-ribose 1-diphosphate + adenine. The protein operates within purine metabolism; AMP biosynthesis via salvage pathway; AMP from adenine: step 1/1. Its function is as follows. Catalyzes a salvage reaction resulting in the formation of AMP, that is energically less costly than de novo synthesis. This is Adenine phosphoribosyltransferase from Klebsiella pneumoniae (strain 342).